A 387-amino-acid chain; its full sequence is Phosphoglycerate kinase (387 aa).

Substrate contacts are provided by residues Asp21 to Asn23, Arg36, His59 to Arg62, Arg113, and Arg146. ATP is bound by residues Lys197, Glu314, and Gly340–Thr343.

This sequence belongs to the phosphoglycerate kinase family. Monomer.

Its subcellular location is the cytoplasm. It catalyses the reaction (2R)-3-phosphoglycerate + ATP = (2R)-3-phospho-glyceroyl phosphate + ADP. Its pathway is carbohydrate degradation; glycolysis; pyruvate from D-glyceraldehyde 3-phosphate: step 2/5. In Alcanivorax borkumensis (strain ATCC 700651 / DSM 11573 / NCIMB 13689 / SK2), this protein is Phosphoglycerate kinase.